Reading from the N-terminus, the 55-residue chain is Spermatid nuclear transition protein 1 (55 aa).

Over residues 1–42 (MSTSRKLKSHGMRRGKNRAPHKGVKRGGSKRKYRKGSLKSRK) the composition is skewed to basic residues. A disordered region spans residues 1–55 (MSTSRKLKSHGMRRGKNRAPHKGVKRGGSKRKYRKGSLKSRKRCDDANRNYRSHL). 3 positions are modified to phosphoserine: serine 9, serine 37, and serine 40.

This sequence belongs to the nuclear transition protein 1 family. As to expression, testis.

It localises to the nucleus. It is found in the chromosome. In terms of biological role, plays a key role in the replacement of histones to protamine in the elongating spermatids of mammals. In condensing spermatids, loaded onto the nucleosomes, where it promotes the recruitment and processing of protamines, which are responsible for histone eviction. The protein is Spermatid nuclear transition protein 1 (TNP1) of Sus scrofa (Pig).